Reading from the N-terminus, the 443-residue chain is tRNA modification GTPase MnmE (443 aa).

Arg23, Glu82, and Lys121 together coordinate (6S)-5-formyl-5,6,7,8-tetrahydrofolate. Residues 215 to 364 (GTSIVLAGHP…LKQFIQQWMQ (150 aa)) form the TrmE-type G domain. Asn225 provides a ligand contact to K(+). Residues 225 to 230 (NAGKSS), 244 to 250 (TDIPGTT), and 269 to 272 (DSAG) contribute to the GTP site. Ser229 serves as a coordination point for Mg(2+). K(+)-binding residues include Thr244, Ile246, and Thr249. Thr250 is a binding site for Mg(2+). Residue Lys443 coordinates (6S)-5-formyl-5,6,7,8-tetrahydrofolate.

This sequence belongs to the TRAFAC class TrmE-Era-EngA-EngB-Septin-like GTPase superfamily. TrmE GTPase family. In terms of assembly, homodimer. Heterotetramer of two MnmE and two MnmG subunits. Requires K(+) as cofactor.

The protein resides in the cytoplasm. In terms of biological role, exhibits a very high intrinsic GTPase hydrolysis rate. Involved in the addition of a carboxymethylaminomethyl (cmnm) group at the wobble position (U34) of certain tRNAs, forming tRNA-cmnm(5)s(2)U34. The protein is tRNA modification GTPase MnmE of Chlamydia abortus (strain DSM 27085 / S26/3) (Chlamydophila abortus).